Here is a 273-residue protein sequence, read N- to C-terminus: SPRY domain-containing SOCS box protein 4 (273 aa).

Residues 34-233 (PARLDQLLDM…MRYINGLDPE (200 aa)) form the B30.2/SPRY domain. In terms of domain architecture, SOCS box spans 234-273 (PLPLMDLCRRSIRSALGRQRLRDIGSLPLPQSLKNYLQYQ).

It belongs to the SPSB family. Component of the probable ECS(SPSB4) E3 ubiquitin-protein ligase complex which contains CUL5, RNF7/RBX2, Elongin BC complex and SPSB4. Interacts with CUL5; RNF7; ELOB and ELOC. Interacts with MET. Interacts (via B30.2/SPRY domain) with PAWR; this interaction occurs in association with the Elongin BC complex. Interacts with NOS2. Interacts with EPHB2.

The protein localises to the cytoplasm. Its subcellular location is the cytosol. The protein operates within protein modification; protein ubiquitination. Substrate recognition component of a SCF-like ECS (Elongin BC-CUL2/5-SOCS-box protein) E3 ubiquitin-protein ligase complex which mediates the ubiquitination and subsequent proteasomal degradation of target proteins. Negatively regulates nitric oxide (NO) production and limits cellular toxicity in activated macrophages by mediating the ubiquitination and proteasomal degradation of NOS2. Acts as a bridge which links NOS2 with the ECS E3 ubiquitin ligase complex components ELOC and CUL5. Diminishes EphB2-dependent cell repulsive responses by mediating the ubiquitination and degradation of the EphB2/CTF2. Regulates cellular clock function by mediating ubiquitination and proteasomal degradation of the circadian transcriptional repressor NR1D1. In Mus musculus (Mouse), this protein is SPRY domain-containing SOCS box protein 4 (Spsb4).